The following is a 473-amino-acid chain: Ribulose bisphosphate carboxylase large chain (473 aa).

Substrate contacts are provided by Asn-116 and Thr-166. The active-site Proton acceptor is Lys-168. Lys-170 contributes to the substrate binding site. Positions 194, 196, and 197 each coordinate Mg(2+). Lys-194 carries the post-translational modification N6-carboxylysine. Catalysis depends on His-287, which acts as the Proton acceptor. 3 residues coordinate substrate: Arg-288, His-320, and Ser-372.

The protein belongs to the RuBisCO large chain family. Type I subfamily. Heterohexadecamer of 8 large chains and 8 small chains. Requires Mg(2+) as cofactor.

The catalysed reaction is 2 (2R)-3-phosphoglycerate + 2 H(+) = D-ribulose 1,5-bisphosphate + CO2 + H2O. The enzyme catalyses D-ribulose 1,5-bisphosphate + O2 = 2-phosphoglycolate + (2R)-3-phosphoglycerate + 2 H(+). In terms of biological role, ruBisCO catalyzes two reactions: the carboxylation of D-ribulose 1,5-bisphosphate, the primary event in carbon dioxide fixation, as well as the oxidative fragmentation of the pentose substrate. Both reactions occur simultaneously and in competition at the same active site. The sequence is that of Ribulose bisphosphate carboxylase large chain from Hydrogenophaga pseudoflava (Pseudomonas carboxydoflava).